A 447-amino-acid polypeptide reads, in one-letter code: Phosphoglucosamine mutase (447 aa).

The Phosphoserine intermediate role is filled by serine 88. Mg(2+)-binding residues include serine 88, aspartate 231, aspartate 233, and aspartate 235. Serine 88 carries the post-translational modification Phosphoserine.

It belongs to the phosphohexose mutase family. It depends on Mg(2+) as a cofactor. In terms of processing, activated by phosphorylation.

It catalyses the reaction alpha-D-glucosamine 1-phosphate = D-glucosamine 6-phosphate. Functionally, catalyzes the conversion of glucosamine-6-phosphate to glucosamine-1-phosphate. The polypeptide is Phosphoglucosamine mutase (Methanococcus maripaludis (strain C5 / ATCC BAA-1333)).